Here is a 488-residue protein sequence, read N- to C-terminus: Envelope glycoprotein gp62 (488 aa).

A signal peptide spans 1–20 (MGKFLATLILFFQFCPLILG). Over 21–442 (DYSPSCCTLT…LGLSQWAREA (422 aa)) the chain is Extracellular. N-linked (GlcNAc...) asparagine; by host glycans are attached at residues asparagine 140 and asparagine 222. Positions 225-228 (CIVC) match the CXXC motif. Disulfide bonds link cysteine 225/cysteine 228, cysteine 225/cysteine 401, and cysteine 393/cysteine 400. 2 N-linked (GlcNAc...) asparagine; by host glycosylation sites follow: asparagine 244 and asparagine 272. The tract at residues 313–333 (AVPVAVWLVSALAIGAGVAGG) is fusion peptide. Coiled coils occupy residues 341–387 (ASGK…LLFW) and 397–429 (QEQCCFLNITNSHVSMLQERPPLENRVLTGWGL). Positions 376–392 (AQNRRGLDLLFWEQGGL) are immunosuppression. The CX6CC signature appears at 393-401 (CKALQEQCC). Residue asparagine 404 is glycosylated (N-linked (GlcNAc...) asparagine; by host). The chain crosses the membrane as a helical span at residues 443–463 (LQTGITLVALLLLVILAGPCI). Cysteine 462 carries S-palmitoyl cysteine; by host lipidation. Residues 464–488 (LRQLRHLPSRVRYPHYSLINPESSL) lie on the Cytoplasmic side of the membrane.

The mature envelope protein (Env) consists of a trimer of SU-TM heterodimers attached by a labile interchain disulfide bond. Specific enzymatic cleavages in vivo yield mature proteins. Envelope glycoproteins are synthesized as an inactive precursor that is N-glycosylated and processed likely by host cell furin or by a furin-like protease in the Golgi to yield the mature SU and TM proteins. The cleavage site between SU and TM requires the minimal sequence [KR]-X-[KR]-R. In terms of processing, the CXXC motif is highly conserved across a broad range of retroviral envelope proteins. It is thought to participate in the formation of a labile disulfide bond possibly with the CX6CC motif present in the transmembrane protein. Isomerization of the intersubunit disulfide bond to an SU intrachain disulfide bond is thought to occur upon receptor recognition in order to allow membrane fusion. Post-translationally, the transmembrane protein is palmitoylated.

It is found in the virion membrane. It localises to the host cell membrane. Functionally, the surface protein (SU) attaches the virus to the host cell by binding to its receptor. This interaction triggers the refolding of the transmembrane protein (TM) and is thought to activate its fusogenic potential by unmasking its fusion peptide. Fusion occurs at the host cell plasma membrane. Its function is as follows. The transmembrane protein (TM) acts as a class I viral fusion protein. Under the current model, the protein has at least 3 conformational states: pre-fusion native state, pre-hairpin intermediate state, and post-fusion hairpin state. During viral and target cell membrane fusion, the coiled coil regions (heptad repeats) assume a trimer-of-hairpins structure, positioning the fusion peptide in close proximity to the C-terminal region of the ectodomain. The formation of this structure appears to drive apposition and subsequent fusion of viral and target cell membranes. Membranes fusion leads to delivery of the nucleocapsid into the cytoplasm. This chain is Envelope glycoprotein gp62 (env), found in Human T-cell leukemia virus 1 (isolate Caribbea CH subtype A) (HTLV-1).